The following is a 343-amino-acid chain: Signaling lymphocytic activation molecule (343 aa).

The signal sequence occupies residues 1-24; it reads MDPKGSLSWRILLFLSLAFELSYG. The Extracellular portion of the chain corresponds to 25–242; that stretch reads TGGGVMDCPV…KQESSSESSP (218 aa). An Ig-like V-type domain is found at 29-138; the sequence is VMDCPVILQK…VQQFCKQLKL (110 aa). N-linked (GlcNAc...) asparagine glycosylation is found at Asn54, Asn58, Asn103, Asn126, Asn151, Asn158, Asn192, Asn211, and Asn226. An Ig-like C2-type domain is found at 145–228; that stretch reads PEIKVLNKTQ…SSISRTFNLS (84 aa). Disulfide bonds link Cys161–Cys232 and Cys167–Cys212. A helical membrane pass occupies residues 243 to 265; it reads WMQYTLVPLGVVIIFILVFTAII. At 266–343 the chain is on the cytoplasmic side; it reads MMKRQGKSNH…VYASVTLPES (78 aa). The short motif at 286–291 is the ITSM 1 element; it reads TIYAQV. 3 positions are modified to phosphotyrosine; by FYN: Tyr288, Tyr315, and Tyr335. The short motif at 313-318 is the SH2-binding element; sequence TIYVAA. A disordered region spans residues 320 to 343; it reads EPAPESVQEPNPTTVYASVTLPES. Residues 327-343 are compositionally biased toward polar residues; the sequence is QEPNPTTVYASVTLPES. The short motif at 333 to 338 is the ITSM 2 element; sequence TVYASV.

Interacts (via cytoplasmic domain) with SH2D1A and SH2D1B; SH2D1A mediates association with FYN; SH2D1A binds to phosphorylated and not phosphorylated ITSM 1. Interacts (via cytoplasmic domain phosphorylated on tyrosine residues) with INPP5D and PTPN11; presence of SH2D1A facilitates binding to INPP5D. Interacts with MAP4K1. Interacts with PIK3C3, BECN1 and UVRAG; indicative for an association with PI3K complex II (PI3KC3-C2). Post-translationally, phosphorylated on tyrosine residues by FYN.

It localises to the cell membrane. In terms of biological role, self-ligand receptor of the signaling lymphocytic activation molecule (SLAM) family. SLAM receptors triggered by homo- or heterotypic cell-cell interactions are modulating the activation and differentiation of a wide variety of immune cells and thus are involved in the regulation and interconnection of both innate and adaptive immune response. Activities are controlled by presence or absence of small cytoplasmic adapter proteins, SH2D1A/SAP and/or SH2D1B/EAT-2. SLAMF1-induced signal-transduction events in T-lymphocytes are different from those in B-cells. Two modes of SLAMF1 signaling seem to exist: one depending on SH2D1A (and perhaps SH2D1B) and another in which protein-tyrosine phosphatase 2C (PTPN11)-dependent signal transduction operates. Initially it has been proposed that association with SH2D1A prevents binding to inhibitory effectors including INPP5D/SHIP1 and PTPN11/SHP-2. However, signaling is also regulated by SH2D1A which can simultaneously interact with and recruit FYN which subsequently phosphorylates and activates SLAMF1. Mediates IL-2-independent proliferation of activated T-cells during immune responses and induces IFN-gamma production. Downstreaming signaling involves INPP5D, DOK1 and DOK2 leading to inhibited IFN-gamma production in T-cells, and PRKCQ, BCL10 and NFKB1 leading to increased T-cell activation and Th2 cytokine production. Promotes T-cell receptor-induced IL-4 secretion by CD4(+) cells. Inhibits antigen receptor-mediated production of IFN-gamma, but not IL-2, in CD4(-)/CD8(-) T-cells. Required for IL-4 production by germinal centers T follicular helper (T(Fh))cells. May inhibit CD40-induced signal transduction in monocyte-derived dendritic cells. May play a role in allergic responses and may regulate allergen-induced Th2 cytokine and Th1 cytokine secretion. In conjunction with SLAMF6 controls the transition between positive selection and the subsequent expansion and differentiation of the thymocytic natural killer T (NKT) cell lineage. Involved in the peripheral differentiation of indifferent natural killer T (iNKT) cells toward a regulatory NKT2 type. In macrophages involved in down-regulation of IL-12, TNF-alpha and nitric oxide in response to lipopolysaccharide (LPS). In B-cells activates the ERK signaling pathway independently of SH2D1A but implicating both, SYK and INPP5D, and activates Akt signaling dependent on SYK and SH2D1A. In conjunction with CD84/SLAMF5 and SLAMF6 may be a negative regulator of the humoral immune response. (Microbial infection) Involved in innate immune response against Gram-negative bacteria in macrophages; probably recognizes OmpC and/or OmpF on the bacterial surface, regulates phagosome maturation and recruitment of the PI3K complex II (PI3KC3-C2) leading to accumulated of PdtIns(3)P and NOX2 activity in the phagosomes. In Mus musculus (Mouse), this protein is Signaling lymphocytic activation molecule (Slamf1).